We begin with the raw amino-acid sequence, 361 residues long: G-protein coupled receptor 68 (361 aa).

The Extracellular portion of the chain corresponds to 1–12; that stretch reads MGNITADNTSMN. Asn-3 and Asn-8 each carry an N-linked (GlcNAc...) asparagine glycan. The helical transmembrane segment at 13-49 threads the bilayer; the sequence is CDIDHTIHQTLAPVVYVMVLVVGFPANCLSLYYGYLQ. Cystine bridges form between Cys-13-Cys-258 and Cys-94-Cys-172. The Cytoplasmic portion of the chain corresponds to 50 to 53; the sequence is IKAR. Residues 54–84 traverse the membrane as a helical segment; sequence NELGVYLCNLTVADLFYICSLPFWLQYVLQH. Residues 85–89 are Extracellular-facing; sequence DHWSH. Residues 90 to 125 traverse the membrane as a helical segment; it reads DDLSCQVCGILLYENIYISVGFLCCISIDRYLAVAH. Residues 126 to 133 are Cytoplasmic-facing; it reads PFRFHQFR. The chain crosses the membrane as a helical span at residues 134 to 160; that stretch reads TLKAAMGVSALIWVKELLTSIYFLMHE. Over 161–176 the chain is Extracellular; sequence EVVEDADRHRVCFEHY. The extracellular loop 2 (ECL2) stretch occupies residues 161-176; sequence EVVEDADRHRVCFEHY. A helical transmembrane segment spans residues 177-214; that stretch reads PLEPRQRGINYYRFLVGFLFPICLLLASYRGILRAVRR. Topologically, residues 215–218 are cytoplasmic; the sequence is SHGT. Residues 219–254 traverse the membrane as a helical segment; it reads QKSRKDQIQRLVLSTVVIFLACFLPYHVLLLVRSLW. At 255-260 the chain is on the extracellular side; that stretch reads ESSCDF. The chain crosses the membrane as a helical span at residues 261 to 289; that stretch reads AKGIFNAYHFSLLLTSFNCVADPVLYCFV. Residues 290 to 361 lie on the Cytoplasmic side of the membrane; sequence SETTHRDLAR…MGGSPAGGLS (72 aa). The tract at residues 340 to 361 is disordered; it reads LHPAFQTPHPPGMGGSPAGGLS. Residues 351-361 are compositionally biased toward gly residues; the sequence is GMGGSPAGGLS.

It belongs to the G-protein coupled receptor 1 family.

It is found in the cell membrane. Its activity is regulated as follows. Activated by a network of residues that connects an extracellular-facing cavity to Glu-149, a conserved charged residue buried in the transmembrane core of the receptor. Protonation likely drives conformational changes in extracellular loop 2 (ECL2), which stabilizes movement of transmembrane 3 (TM3) and a series of rearrangements that connect the extracellular-facing cavity to Glu-149, a residue only conserved in proton-sensing G-protein coupled receptors. Activated in an allosteric manner by divalent metal ions at the extracellular surface following the order: Cd(2+) &gt; Co(2+) &gt; Ni(2+) &gt; Zn(2+) &gt; Fe(2+) &gt; Ca(2+) &gt; Mg(2+). In terms of biological role, proton-sensing G-protein coupled receptor activated by extracellular pH, which is required to monitor pH changes and generate adaptive reactions. The receptor is almost silent at pH 7.8 but fully activated at pH 6.8. Ligand binding causes a conformation change that triggers signaling via guanine nucleotide-binding proteins (G proteins) and modulates the activity of downstream effectors, such as phospholipase C. GPR68 is mainly coupled to G(q) G proteins and mediates production of diacylglycerol (DAG) and inositol 1,4,5-trisphosphate (IP3). Acts as a key mechanosensor of fluid shear stress and membrane stretch. Expressed in endothelial cells of small-diameter resistance arteries, where it mediates flow-induced dilation in response to shear stress. May represents an osteoblastic pH sensor regulating cell-mediated responses to acidosis in bone. Acts as a regulator of calcium-sensing receptor CASR in a seesaw manner: GPR68-mediated signaling inhibits CASR signaling in response to protons, while CASR inhibits GPR68 in presence of extracellular calcium. The protein is G-protein coupled receptor 68 (GPR68) of Bos taurus (Bovine).